We begin with the raw amino-acid sequence, 141 residues long: Hemoglobin subunit alpha (141 aa).

The Globin domain maps to 1 to 141 (VLSEADKSNV…VSTVLTSKYR (141 aa)). An O2-binding site is contributed by histidine 58. Histidine 87 contacts heme b.

This sequence belongs to the globin family. Heterotetramer of two alpha chains and two beta chains. When oxygenated in vitro, exists virtually only in polymeric form. When deoxygenated, forms tetramers, octamers and larger polymers. In terms of tissue distribution, red blood cells.

Functionally, involved in oxygen transport from the lung to the various peripheral tissues. This is Hemoglobin subunit alpha from Paleosuchus palpebrosus (Cuvier's smooth-fronted caiman).